Consider the following 430-residue polypeptide: Enolase (430 aa).

(2R)-2-phosphoglycerate is bound at residue Gln-167. The active-site Proton donor is the Glu-209. The Mg(2+) site is built by Asp-246, Glu-287, and Asp-314. Lys-339, Arg-368, Ser-369, and Lys-390 together coordinate (2R)-2-phosphoglycerate. The active-site Proton acceptor is Lys-339.

It belongs to the enolase family. It depends on Mg(2+) as a cofactor.

It localises to the cytoplasm. The protein resides in the secreted. The protein localises to the cell surface. It carries out the reaction (2R)-2-phosphoglycerate = phosphoenolpyruvate + H2O. It functions in the pathway carbohydrate degradation; glycolysis; pyruvate from D-glyceraldehyde 3-phosphate: step 4/5. Its function is as follows. Catalyzes the reversible conversion of 2-phosphoglycerate (2-PG) into phosphoenolpyruvate (PEP). It is essential for the degradation of carbohydrates via glycolysis. The polypeptide is Enolase (Prochlorococcus marinus (strain MIT 9515)).